The sequence spans 201 residues: HTH-type transcriptional regulator Hpr (201 aa).

The HTH marR-type domain occupies 13-157 (AMLFSQRIAQ…MMCIIRNIYG (145 aa)). Residues 63-86 (ISEIAKFGVMHVSTAFNFSKKLEE) constitute a DNA-binding region (H-T-H motif).

Homodimer.

Its function is as follows. Negative regulator of protease production and sporulation. This chain is HTH-type transcriptional regulator Hpr, found in Geobacillus sp. (strain WCH70).